A 310-amino-acid polypeptide reads, in one-letter code: Protoheme IX farnesyltransferase 2 (310 aa).

A run of 9 helical transmembrane segments spans residues 25-45 (PGIIFGNLISVAGGFLLAAKG), 49-69 (LVLMLASLVGLSLVVASGCAI), 98-118 (HVLLFGIALGVLGFGILALFT), 121-141 (LALLFAAIGYVVYVGIYSLYM), 145-165 (SVYGTLVGSFSGAVPPVVGYC), 176-196 (VILLLMFSLWQMPHSYAIAIF), 222-242 (IVLYIAVFALVSTMLPLAGYT), 245-265 (AFMAVTCATSLWWLTMALKGY), and 277-297 (QVFGFSIITITALSVTMALDF).

Belongs to the UbiA prenyltransferase family. Protoheme IX farnesyltransferase subfamily.

It localises to the cell inner membrane. It carries out the reaction heme b + (2E,6E)-farnesyl diphosphate + H2O = Fe(II)-heme o + diphosphate. It functions in the pathway porphyrin-containing compound metabolism; heme O biosynthesis; heme O from protoheme: step 1/1. Functionally, converts heme B (protoheme IX) to heme O by substitution of the vinyl group on carbon 2 of heme B porphyrin ring with a hydroxyethyl farnesyl side group. This Shewanella sp. (strain ANA-3) protein is Protoheme IX farnesyltransferase 2.